The primary structure comprises 593 residues: Uncoordinated protein 58 (593 aa).

The next 6 helical transmembrane spans lie at Val186–Leu206, Thr291–Val311, Val320–Ile340, Pro402–Ile422, Phe430–Val450, and Ile455–Val475.

The protein belongs to the two pore domain potassium channel (TC 1.A.1.8) family.

It is found in the membrane. In terms of biological role, has a role in mobility, possibly in the transport of potassium in muscles. This is Uncoordinated protein 58 from Caenorhabditis briggsae.